We begin with the raw amino-acid sequence, 283 residues long: ATP synthase gamma chain (283 aa).

The protein belongs to the ATPase gamma chain family. In terms of assembly, F-type ATPases have 2 components, CF(1) - the catalytic core - and CF(0) - the membrane proton channel. CF(1) has five subunits: alpha(3), beta(3), gamma(1), delta(1), epsilon(1). CF(0) has three main subunits: a, b and c.

The protein resides in the cell membrane. In terms of biological role, produces ATP from ADP in the presence of a proton gradient across the membrane. The gamma chain is believed to be important in regulating ATPase activity and the flow of protons through the CF(0) complex. This is ATP synthase gamma chain from Clostridium kluyveri (strain NBRC 12016).